Here is a 170-residue protein sequence, read N- to C-terminus: Small ribosomal subunit protein uS5 (170 aa).

The S5 DRBM domain maps to 11 to 74 (ILEKLVHINR…ETARRVLIHV (64 aa)).

The protein belongs to the universal ribosomal protein uS5 family. As to quaternary structure, part of the 30S ribosomal subunit. Contacts proteins S4 and S8.

Functionally, with S4 and S12 plays an important role in translational accuracy. Located at the back of the 30S subunit body where it stabilizes the conformation of the head with respect to the body. This is Small ribosomal subunit protein uS5 from Pelagibacter ubique (strain HTCC1062).